The following is a 1076-amino-acid chain: Cytadherence high molecular weight protein 3 (1076 aa).

A fibronectin-binding region spans residues 264-284; the sequence is QGYDQGYDQQYDQQGYDQQGY. Low complexity predominate over residues 326-335; that stretch reads QQPVEVAKPA. A disordered region spans residues 326–351; the sequence is QQPVEVAKPAPTKPVGPKPQPGKKAT. The span at 336-345 shows a compositional bias: pro residues; the sequence is PTKPVGPKPQ. A coiled-coil region spans residues 562-616; it reads EITKLEELVEIKTDNTESLNKLETLIDENKKIIDQFKQLKEEAKKSNSNINLEKV. Disordered regions lie at residues 789–808 and 850–873; these read SREHEQVQPKAQHQQPTTRI and RINPQDSYYDQGYEQPDPYQEQQP. Residues 797-806 show a composition bias toward polar residues; sequence PKAQHQQPTT. Low complexity predominate over residues 862–873; the sequence is YEQPDPYQEQQP.

Its subcellular location is the cell projection. It localises to the attachment organelle membrane. Its function is as follows. Binds immobilized fibronectin. Functionally, component of the cytoskeleton-like structure which stabilizes the shape of the wall-less mycoplasma. This cytoskeleton-like network of accessory proteins containing HMW proteins 1 to 5 allows the proper anchoring of cytadhesin proteins in the mycoplasmal membrane at the attachment organelle. Essential for successful surface parasitism. In Mycoplasmoides gallisepticum (strain R(low / passage 15 / clone 2)) (Mycoplasma gallisepticum), this protein is Cytadherence high molecular weight protein 3 (hlp3).